The sequence spans 291 residues: tRNA U34 carboxymethyltransferase (291 aa).

Residues Lys61, Trp75, Lys80, Gly100, Asp122–Ser124, Val149–Glu150, Tyr169, and Arg284 each bind carboxy-S-adenosyl-L-methionine.

This sequence belongs to the class I-like SAM-binding methyltransferase superfamily. CmoB family. In terms of assembly, homotetramer.

It catalyses the reaction carboxy-S-adenosyl-L-methionine + 5-hydroxyuridine(34) in tRNA = 5-carboxymethoxyuridine(34) in tRNA + S-adenosyl-L-homocysteine + H(+). Functionally, catalyzes carboxymethyl transfer from carboxy-S-adenosyl-L-methionine (Cx-SAM) to 5-hydroxyuridine (ho5U) to form 5-carboxymethoxyuridine (cmo5U) at position 34 in tRNAs. This chain is tRNA U34 carboxymethyltransferase, found in Campylobacter jejuni (strain RM1221).